The chain runs to 181 residues: Crossover junction endodeoxyribonuclease RuvC (181 aa).

Residues Asp-7, Glu-67, and Asp-139 contribute to the active site. Mg(2+)-binding residues include Asp-7, Glu-67, and Asp-139.

Belongs to the RuvC family. As to quaternary structure, homodimer which binds Holliday junction (HJ) DNA. The HJ becomes 2-fold symmetrical on binding to RuvC with unstacked arms; it has a different conformation from HJ DNA in complex with RuvA. In the full resolvosome a probable DNA-RuvA(4)-RuvB(12)-RuvC(2) complex forms which resolves the HJ. The cofactor is Mg(2+).

The protein resides in the cytoplasm. It catalyses the reaction Endonucleolytic cleavage at a junction such as a reciprocal single-stranded crossover between two homologous DNA duplexes (Holliday junction).. The RuvA-RuvB-RuvC complex processes Holliday junction (HJ) DNA during genetic recombination and DNA repair. Endonuclease that resolves HJ intermediates. Cleaves cruciform DNA by making single-stranded nicks across the HJ at symmetrical positions within the homologous arms, yielding a 5'-phosphate and a 3'-hydroxyl group; requires a central core of homology in the junction. The consensus cleavage sequence is 5'-(A/T)TT(C/G)-3'. Cleavage occurs on the 3'-side of the TT dinucleotide at the point of strand exchange. HJ branch migration catalyzed by RuvA-RuvB allows RuvC to scan DNA until it finds its consensus sequence, where it cleaves and resolves the cruciform DNA. This is Crossover junction endodeoxyribonuclease RuvC from Cupriavidus taiwanensis (strain DSM 17343 / BCRC 17206 / CCUG 44338 / CIP 107171 / LMG 19424 / R1) (Ralstonia taiwanensis (strain LMG 19424)).